Consider the following 217-residue polypeptide: Ras-related protein RABA1e (217 aa).

20 to 27 (GDSGVGKS) provides a ligand contact to GTP. Positions 42 to 50 (SKSTIGVEF) match the Effector region motif. Residues 68-72 (DTAGQ), 126-129 (NKAD), and 156-157 (SA) each bind GTP. S-geranylgeranyl cysteine attachment occurs at residues Cys-214 and Cys-215.

It belongs to the small GTPase superfamily. Rab family.

It localises to the cell membrane. Functionally, intracellular vesicle trafficking and protein transport. The protein is Ras-related protein RABA1e (RABA1E) of Arabidopsis thaliana (Mouse-ear cress).